Reading from the N-terminus, the 101-residue chain is Small ribosomal subunit protein uS14 (101 aa).

It belongs to the universal ribosomal protein uS14 family. In terms of assembly, part of the 30S ribosomal subunit. Contacts proteins S3 and S10.

Binds 16S rRNA, required for the assembly of 30S particles and may also be responsible for determining the conformation of the 16S rRNA at the A site. This chain is Small ribosomal subunit protein uS14, found in Pseudoalteromonas translucida (strain TAC 125).